The chain runs to 386 residues: Small ribosomal subunit protein mS31 (386 aa).

It belongs to the mitochondrion-specific ribosomal protein mS31 family. In terms of assembly, component of the mitochondrial ribosome small subunit (28S) which comprises a 12S rRNA and about 30 distinct proteins.

It localises to the mitochondrion. In Bos taurus (Bovine), this protein is Small ribosomal subunit protein mS31 (MRPS31).